A 129-amino-acid polypeptide reads, in one-letter code: Histone H2A.J (129 aa).

The disordered stretch occupies residues 1–22 (MSGRGKQGGKVRAKAKSRSSRA). K6 and K10 each carry N6-acetyllysine. Positions 7 to 19 (QGGKVRAKAKSRS) are enriched in basic residues. K10 carries the N6-lactoyllysine; alternate modification. Position 105 is an N5-methylglutamine (Q105). Residue T121 is modified to Phosphothreonine; by DCAF1.

This sequence belongs to the histone H2A family. The nucleosome is a histone octamer containing two molecules each of H2A, H2B, H3 and H4 assembled in one H3-H4 heterotetramer and two H2A-H2B heterodimers. The octamer wraps approximately 147 bp of DNA. Post-translationally, monoubiquitination of Lys-120 (H2AXK119ub) gives a specific tag for epigenetic transcriptional repression. Following DNA double-strand breaks (DSBs), it is ubiquitinated through 'Lys-63' linkage of ubiquitin moieties. In terms of processing, glutamine methylation at Gln-105 (H2AQ104me) by FBL is specifically dedicated to polymerase I. It is present at 35S ribosomal DNA locus and impairs binding of the FACT complex. Phosphorylation on Ser-2 (H2AS1ph) is enhanced during mitosis. Phosphorylation on Ser-2 by RPS6KA5/MSK1 directly represses transcription. Acetylation of H3 inhibits Ser-2 phosphorylation by RPS6KA5/MSK1. Phosphorylation at Thr-121 (H2AT120ph) by DCAF1 is present in the regulatory region of many tumor suppresor genes and down-regulates their transcription.

Its subcellular location is the nucleus. The protein localises to the chromosome. In terms of biological role, core component of nucleosome. Nucleosomes wrap and compact DNA into chromatin, limiting DNA accessibility to the cellular machineries which require DNA as a template. Histones thereby play a central role in transcription regulation, DNA repair, DNA replication and chromosomal stability. DNA accessibility is regulated via a complex set of post-translational modifications of histones, also called histone code, and nucleosome remodeling. This chain is Histone H2A.J, found in Macaca fascicularis (Crab-eating macaque).